The sequence spans 270 residues: Transcription factor PU.1 (270 aa).

The disordered stretch occupies residues 123 to 164 (SLSPAQPSSDEEEGERQSPPLEVSDGEADGLEPGPGLLPGET). A phosphoserine mark is found at serine 140 and serine 146. Positions 153-164 (LEPGPGLLPGET) are enriched in low complexity. The ETS DNA-binding region spans 170–253 (IRLYQFLLDL…VKKKLTYQFS (84 aa)). DNA-binding residues include lysine 217, arginine 230, arginine 233, and lysine 243.

It belongs to the ETS family. As to quaternary structure, binds DNA as a monomer. Can form homomers. Directly interacts with CEBPD/NF-IL6-beta; this interaction does not affect DNA-binding properties of each partner. Interacts with NONO/p54(nrb). Interacts with RUNX1/AML1. Interacts with GFI1; the interaction represses SPI1 transcriptional activity, hence blocks SPI1-induced macrophage differentiation of myeloid progenitor cells. Interacts with CEBPE. Interacts with IRF4/Pip and IRF8. Interacts with JUN. Interacts with RB1. Interacts with TBP. As to expression, in the bone marrow, concentrated in hematopoietic stem cell, lymphoid progenitor, myeloid lineage (granulocyte macrophage progenitors, classical dendritic cells, monocytes) and B-cell clusters. Among B-cells, predominantly expressed in pre-B1 cells. Expressed in germinal center B-cells.

Its subcellular location is the nucleus. Transcriptional activity at macrophage-specific genes is inhibited by interaction with GFI1, which results in the inhibition of SPI1-induced macrophage differentiation of myeloid progenitor cells, but not that of the granulocyte lineage. Pioneer transcription factor, which controls hematopoietic cell fate by decompacting stem cell heterochromatin and allowing other transcription factors to enter otherwise inaccessible genomic sites. Once in open chromatin, can directly control gene expression by binding genetic regulatory elements and can also more broadly influence transcription by recruiting transcription factors, such as interferon regulatory factors (IRFs), to otherwise inaccessible genomic regions. Transcriptionally activates genes important for myeloid and lymphoid lineages, such as CSF1R. Transcriptional activation from certain promoters, possibly containing low affinity binding sites, is achieved cooperatively with other transcription factors. FCER1A transactivation is achieved in cooperation with GATA1. May be particularly important for the pro- to pre-B cell transition. Binds (via the ETS domain) onto the purine-rich DNA core sequence 5'-GAGGAA-3', also known as the PU-box. In vitro can bind RNA and interfere with pre-mRNA splicing. This is Transcription factor PU.1 (SPI1) from Homo sapiens (Human).